Consider the following 160-residue polypeptide: Non-secretory ribonuclease (160 aa).

The first 27 residues, 1 to 27, serve as a signal peptide directing secretion; that stretch reads MVPKLFTSQICLLLLLGLMGVEGSLHA. C-linked (Man) tryptophan glycosylation is present at tryptophan 34. Histidine 42 (proton acceptor) is an active-site residue. A glycan (N-linked (GlcNAc...) asparagine) is linked at asparagine 44. 4 disulfides stabilise this stretch: cysteine 50-cysteine 110, cysteine 64-cysteine 122, cysteine 82-cysteine 137, and cysteine 89-cysteine 98. Tyrosine 60 carries the post-translational modification 3'-nitrotyrosine. A substrate-binding site is contributed by 65 to 69; that stretch reads KNQNT. 3 N-linked (GlcNAc...) asparagine glycosylation sites follow: asparagine 92, asparagine 111, and asparagine 138. The active-site Proton donor is the histidine 155.

Belongs to the pancreatic ribonuclease family. Interacts with and forms a tight 1:1 complex with RNH1. Dimerization of two such complexes may occur.

Its subcellular location is the lysosome. It is found in the cytoplasmic granule. The enzyme catalyses an [RNA] containing cytidine + H2O = an [RNA]-3'-cytidine-3'-phosphate + a 5'-hydroxy-ribonucleotide-3'-[RNA].. The catalysed reaction is an [RNA] containing uridine + H2O = an [RNA]-3'-uridine-3'-phosphate + a 5'-hydroxy-ribonucleotide-3'-[RNA].. This is a non-secretory ribonuclease. It is a pyrimidine specific nuclease with a slight preference for U. Cytotoxin and helminthotoxin. Possesses a wide variety of biological activities. This chain is Non-secretory ribonuclease (RNASE2), found in Macaca fascicularis (Crab-eating macaque).